Reading from the N-terminus, the 906-residue chain is Transmembrane channel-like protein 2 (906 aa).

Residues 1–150 (MSHQVKGLKE…SASGGESLSE (150 aa)) form a disordered region. Residues 1-263 (MSHQVKGLKE…IFLRWMYGVN (263 aa)) are Cytoplasmic-facing. Residues 69-79 (PRRKQTGRRRH) are compositionally biased toward basic residues. Basic and acidic residues predominate over residues 80-127 (REELGEQERGEAERTCEGRRKRDERASFQERTAAPKREKEIPRREEKS). Residues 135–147 (SSSLASSASGGES) show a composition bias toward low complexity. Residues 264-284 (LVLFGLIFGLVIIPEVLMGMP) form a helical membrane-spanning segment. Over 285-336 (YGSIPRKTVPRAEEEKAMDFSVLWDFEGYIKYSALFYGYYNNQRTIGWLRYR) the chain is Extracellular. A helical membrane pass occupies residues 337–357 (LPMAYFMVGVSVFGYSLIIVI). At 358 to 431 (RSMASNTQGS…NIHLTRFLRV (74 aa)) the chain is on the cytoplasmic side. The helical transmembrane segment at 432 to 452 (LANFLIICCLCGSGYLIYFVV) threads the bilayer. Residues 453–508 (KRSQQFSKMQNVSWYERNEVEIVMSLLGMFCPPLFETIAALENYHPRTGLKWQLGR) lie on the Extracellular side of the membrane. The chain crosses the membrane as a helical span at residues 509 to 529 (IFALFLGNLYTFLLALMDDVH). The Cytoplasmic segment spans residues 530–693 (LKLANEETIK…RVFKASRSNN (164 aa)). The helical transmembrane segment at 694 to 714 (FYMGLLLLVLFLSLLPVAYTI) threads the bilayer. The Extracellular segment spans residues 715–750 (MSLPPSFDCGPFSGKNRMYDVLQETIENDFPTFLGK). The helical transmembrane segment at 751 to 771 (IFAFLANPGLIIPAILLMFLA) threads the bilayer. Residues 772–906 (IYYLNSVSKS…SGKSAQRPPH (135 aa)) lie on the Cytoplasmic side of the membrane. Residues 800 to 906 (EKSHKSVKGK…SGKSAQRPPH (107 aa)) form a disordered region. 3 stretches are compositionally biased toward polar residues: residues 820 to 846 (KSSSKNATQLQLTKEETTPPSASQSQA), 854 to 866 (PGTSNSASRTTLP), and 886 to 900 (APSQTHPWRSASGKS).

This sequence belongs to the TMC family. As to quaternary structure, forms the MET channel composed of TMC dimer (TMC1 or TMC2), TMIE, TOMT, CIB (CIB2 or CIB3), LHFPL5 and PDH15. The interaction of TMC1 and TMC2 with TOMT is required for the transportation of TMC1/2 into the stereocilia of hair cells. Interacts (via N-terminus) with both isoforms CD1 and CD3 of PCDH15. Can form a heterodimer with TMC1, TMC5 or TMC7. Detected in fetal cochlea.

It is found in the cell membrane. It carries out the reaction Ca(2+)(in) = Ca(2+)(out). Functionally, pore-forming subunit of the mechanotransducer (MET) non-selective cation channel complex located at the tips of stereocilia of cochlear hair cells and that mediates sensory transduction in the auditory system. The MET complex is composed of two dimeric pore-forming ion-conducting transmembrane TMC (TMC1 or TMC2) subunits, and aided by several auxiliary proteins including LHFPL5, TMIE, CIB2/3 and TOMT, and the tip-link PCDH15. MET channel is activated by tension in the tip-link extending from the side wall of one stereocilium to the tip of the adjacent shorter stereocilium, where the channel is located. TMC2 MET channel is highly permeable to calcium and likely transports monovalent cations. Also involved in vestibular hair cell transduction current of the mammalian inner ear. This chain is Transmembrane channel-like protein 2, found in Homo sapiens (Human).